The sequence spans 452 residues: Heat shock protein 83 (452 aa).

R124 contributes to the ATP binding site. Positions 448 to 452 match the TPR repeat-binding motif; the sequence is MEQVD.

Belongs to the heat shock protein 90 family. As to quaternary structure, homodimer.

The protein localises to the cytoplasm. In terms of biological role, molecular chaperone that promotes the maturation, structural maintenance and proper regulation of specific target proteins involved for instance in cell cycle control and signal transduction. Undergoes a functional cycle that is linked to its ATPase activity. This cycle probably induces conformational changes in the client proteins, thereby causing their activation. Interacts dynamically with various co-chaperones that modulate its substrate recognition, ATPase cycle and chaperone function. The polypeptide is Heat shock protein 83 (HSP83) (Leishmania donovani).